Reading from the N-terminus, the 361-residue chain is Chorismate synthase (361 aa).

Positions 48 and 54 each coordinate NADP(+). Residues 125–127 (RSS), 238–239 (NA), Gly278, 293–297 (KPTSS), and Arg319 contribute to the FMN site.

This sequence belongs to the chorismate synthase family. In terms of assembly, homotetramer. It depends on FMNH2 as a cofactor.

It catalyses the reaction 5-O-(1-carboxyvinyl)-3-phosphoshikimate = chorismate + phosphate. Its pathway is metabolic intermediate biosynthesis; chorismate biosynthesis; chorismate from D-erythrose 4-phosphate and phosphoenolpyruvate: step 7/7. Catalyzes the anti-1,4-elimination of the C-3 phosphate and the C-6 proR hydrogen from 5-enolpyruvylshikimate-3-phosphate (EPSP) to yield chorismate, which is the branch point compound that serves as the starting substrate for the three terminal pathways of aromatic amino acid biosynthesis. This reaction introduces a second double bond into the aromatic ring system. This is Chorismate synthase from Cronobacter sakazakii (strain ATCC BAA-894) (Enterobacter sakazakii).